The chain runs to 464 residues: Pup--protein ligase (464 aa).

Glu-14 is a Mg(2+) binding site. Arg-58 lines the ATP pocket. Tyr-60 contacts Mg(2+). Asp-62 serves as the catalytic Proton acceptor. Glu-68 contributes to the Mg(2+) binding site. ATP contacts are provided by Thr-71 and Trp-430.

The protein belongs to the Pup ligase/Pup deamidase family. Pup-conjugating enzyme subfamily.

The catalysed reaction is ATP + [prokaryotic ubiquitin-like protein]-L-glutamate + [protein]-L-lysine = ADP + phosphate + N(6)-([prokaryotic ubiquitin-like protein]-gamma-L-glutamyl)-[protein]-L-lysine.. It participates in protein degradation; proteasomal Pup-dependent pathway. It functions in the pathway protein modification; protein pupylation. Its function is as follows. Catalyzes the covalent attachment of the prokaryotic ubiquitin-like protein modifier Pup to the proteasomal substrate proteins, thereby targeting them for proteasomal degradation. This tagging system is termed pupylation. The ligation reaction involves the side-chain carboxylate of the C-terminal glutamate of Pup and the side-chain amino group of a substrate lysine. In Micrococcus luteus (strain ATCC 4698 / DSM 20030 / JCM 1464 / CCM 169 / CCUG 5858 / IAM 1056 / NBRC 3333 / NCIMB 9278 / NCTC 2665 / VKM Ac-2230) (Micrococcus lysodeikticus), this protein is Pup--protein ligase.